The sequence spans 210 residues: Imidazole glycerol phosphate synthase subunit HisH (210 aa).

Residues 1 to 210 (MIAILDYGMG…KLLENFIRFI (210 aa)) enclose the Glutamine amidotransferase type-1 domain. Cys-79 acts as the Nucleophile in catalysis. Residues His-191 and Glu-193 contribute to the active site.

As to quaternary structure, heterodimer of HisH and HisF.

The protein localises to the cytoplasm. It carries out the reaction 5-[(5-phospho-1-deoxy-D-ribulos-1-ylimino)methylamino]-1-(5-phospho-beta-D-ribosyl)imidazole-4-carboxamide + L-glutamine = D-erythro-1-(imidazol-4-yl)glycerol 3-phosphate + 5-amino-1-(5-phospho-beta-D-ribosyl)imidazole-4-carboxamide + L-glutamate + H(+). The catalysed reaction is L-glutamine + H2O = L-glutamate + NH4(+). It participates in amino-acid biosynthesis; L-histidine biosynthesis; L-histidine from 5-phospho-alpha-D-ribose 1-diphosphate: step 5/9. Its function is as follows. IGPS catalyzes the conversion of PRFAR and glutamine to IGP, AICAR and glutamate. The HisH subunit catalyzes the hydrolysis of glutamine to glutamate and ammonia as part of the synthesis of IGP and AICAR. The resulting ammonia molecule is channeled to the active site of HisF. This Leptospira interrogans serogroup Icterohaemorrhagiae serovar copenhageni (strain Fiocruz L1-130) protein is Imidazole glycerol phosphate synthase subunit HisH.